Consider the following 179-residue polypeptide: Sodium/potassium-transporting ATPase subunit beta-1-interacting protein 3 (179 aa).

A run of 4 helical transmembrane segments spans residues 5-22, 35-55, 62-82, and 151-171; these read TGRC…LVAL, APIL…FGTI, IVAY…IICF, and AVQI…ISVI.

This sequence belongs to the NKAIN family. As to quaternary structure, interacts with atp1b1 C-terminus.

It is found in the cell membrane. This chain is Sodium/potassium-transporting ATPase subunit beta-1-interacting protein 3 (nkain3), found in Xenopus laevis (African clawed frog).